Consider the following 1187-residue polypeptide: ATP-dependent DNA helicase MER3 (1187 aa).

Positions 1 to 41 (MKTKFDRLGTGKRSRPSPNNIDFNDQSATFKRNKKNSRQPS) are disordered. The segment covering 16–30 (PSPNNIDFNDQSATF) has biased composition (polar residues). Positions 148–322 (PSIYESNENC…WLKTNNELPA (175 aa)) constitute a Helicase ATP-binding domain. Residue 161–168 (SPTGSGKT) coordinates ATP. A DEIH box motif is present at residues 268 to 271 (DEIH). The region spanning 360-542 (KLIEIIEKHA…NLIEHLAAET (183 aa)) is the Helicase C-terminal domain. The 307-residue stretch at 616 to 922 (STAYGNAMTR…PKLEKIEFSI (307 aa)) folds into the SEC63 domain. The C4-type zinc finger occupies 1039-1054 (CFHSCKDKTQCRHLCC). The segment at 1146–1187 (NCPEIIPIDLESSDSYSSNTAASSISDPNGDLDFLGSDIEFE) is disordered. Residues 1158 to 1171 (SDSYSSNTAASSIS) show a composition bias toward low complexity.

It belongs to the helicase family. SKI2 subfamily. In terms of assembly, oligomerizes. A divalent metal cation serves as cofactor. It depends on Zn(2+) as a cofactor.

Its subcellular location is the nucleus. The catalysed reaction is Couples ATP hydrolysis with the unwinding of duplex DNA by translocating in the 3'-5' direction.. The enzyme catalyses ATP + H2O = ADP + phosphate + H(+). Functionally, DNA-dependent ATPase and 3'-5' DNA helicase. Required in the control of double strand break transition and crossover during meiosis. ATPase is slightly better stimulated by single-stranded (ss) than double-stranded (ds)DNA. Unwinds Holliday junction (HJ) DNA to Y-DNA and to ssDNA. Efficient unwinding requires 6 nucleotides of 3'-ssDNA; seems to initiate unwinding from blunt ends when they open slightly. Binds HJ, dsDNA, ssDNA and 3'- and 5-overhang DNA. The protein is ATP-dependent DNA helicase MER3 of Saccharomyces cerevisiae (strain ATCC 204508 / S288c) (Baker's yeast).